A 253-amino-acid chain; its full sequence is Light-harvesting complex stress-related protein 1, chloroplastic (253 aa).

The transit peptide at 1-39 (MAMMMRKAAAVPASSRRSVAVNSVSGKRTVSGKAGAPVP) directs the protein to the chloroplast. Position 45 (tyrosine 45) interacts with chlorophyll b. Positions 60, 81, and 84 each coordinate chlorophyll a. Arginine 86 provides a ligand contact to chlorophyll b. A helical membrane pass occupies residues 87–107 (VAMLAALGFIVGEQLQDFPLF). Glutamine 124 is a binding site for chlorophyll a. The chain crosses the membrane as a helical span at residues 131 to 151 (EPLLIAIGVAESYRVAVGWAT). Chlorophyll b is bound by residues glutamate 141 and arginine 144. Residues lysine 190, glutamate 191, asparagine 194, arginine 196, and glutamine 208 each coordinate chlorophyll a. Residues 197-217 (LAMIAIAAFVAQELVEQTEIF) form a helical membrane-spanning segment.

It belongs to the light-harvesting chlorophyll a/b-binding (LHC) protein family.

It is found in the plastid. It localises to the chloroplast thylakoid membrane. Its function is as follows. Required for non-photochemical quenching (NPQ), a mechanism that converts and dissipates the harmful excess absorbed light energy into heat and protect the photosynthetic apparatus from photo-oxidative damage. Is able to sense luminal acidification of the thylakoid membranes, which occurs along with elevated electron flow caused by excess light, and to induce a large, fast, and reversible pH-dependent quenching in LHCII-containing membranes. Mediates excitation energy transfer from light-harvesting complex II (LHCII) to photosystem I (PSI), rather than photosystem II (PSII), at low pH, which mimics the acidified lumen of the thylakoid membranes in high light-exposed chloroplasts. Activates PSI-dependent fluorescence quenching in addition to dissipating excitation energy in LHCII to avoid photooxidative stress under excess light. This Chlamydomonas reinhardtii (Chlamydomonas smithii) protein is Light-harvesting complex stress-related protein 1, chloroplastic.